Reading from the N-terminus, the 808-residue chain is Enhancer of polycomb homolog 2 (808 aa).

Glycyl lysine isopeptide (Lys-Gly) (interchain with G-Cter in SUMO2) cross-links involve residues K135, K195, and K324. Residues 337 to 357 (YPKKPKAEAGIAPQQPTPETL) are disordered. K362 participates in a covalent cross-link: Glycyl lysine isopeptide (Lys-Gly) (interchain with G-Cter in SUMO2). 3 disordered regions span residues 371–397 (QSSD…PDGS), 595–630 (QRQQ…CMSK), and 645–682 (VSAP…LYST). The span at 595–614 (QRQQLAQLHQKQQSQHSSQQ) shows a compositional bias: low complexity. Composition is skewed to polar residues over residues 615–630 (THPK…CMSK) and 658–682 (EQNT…LYST). At S755 the chain carries Phosphoserine.

The protein belongs to the enhancer of polycomb family.

The protein resides in the nucleus. Its function is as follows. May play a role in transcription or DNA repair. The sequence is that of Enhancer of polycomb homolog 2 (Epc2) from Mus musculus (Mouse).